The following is a 132-amino-acid chain: uncharacterized protein (132 aa).

3 helical membrane passes run 19 to 39 (FTWI…FIFL), 58 to 78 (IGLR…VAVM), and 93 to 113 (LIAY…CAAL).

The protein belongs to the bacteriophage holin family. Cp-1 holin subfamily.

It is found in the cell membrane. This is an uncharacterized protein from Clostridium perfringens.